The chain runs to 204 residues: Holliday junction branch migration complex subunit RuvA (204 aa).

Residues Met1 to Leu63 form a domain I region. A domain II region spans residues Thr64–Lys142. Residues Glu143–Asn149 form a flexible linker region. A domain III region spans residues Ile150 to Ser204.

The protein belongs to the RuvA family. As to quaternary structure, homotetramer. Forms an RuvA(8)-RuvB(12)-Holliday junction (HJ) complex. HJ DNA is sandwiched between 2 RuvA tetramers; dsDNA enters through RuvA and exits via RuvB. An RuvB hexamer assembles on each DNA strand where it exits the tetramer. Each RuvB hexamer is contacted by two RuvA subunits (via domain III) on 2 adjacent RuvB subunits; this complex drives branch migration. In the full resolvosome a probable DNA-RuvA(4)-RuvB(12)-RuvC(2) complex forms which resolves the HJ.

It localises to the cytoplasm. The RuvA-RuvB-RuvC complex processes Holliday junction (HJ) DNA during genetic recombination and DNA repair, while the RuvA-RuvB complex plays an important role in the rescue of blocked DNA replication forks via replication fork reversal (RFR). RuvA specifically binds to HJ cruciform DNA, conferring on it an open structure. The RuvB hexamer acts as an ATP-dependent pump, pulling dsDNA into and through the RuvAB complex. HJ branch migration allows RuvC to scan DNA until it finds its consensus sequence, where it cleaves and resolves the cruciform DNA. This chain is Holliday junction branch migration complex subunit RuvA, found in Rickettsia rickettsii (strain Iowa).